The sequence spans 176 residues: Large ribosomal subunit protein uL6 (176 aa).

Belongs to the universal ribosomal protein uL6 family. In terms of assembly, part of the 50S ribosomal subunit.

Its function is as follows. This protein binds to the 23S rRNA, and is important in its secondary structure. It is located near the subunit interface in the base of the L7/L12 stalk, and near the tRNA binding site of the peptidyltransferase center. The sequence is that of Large ribosomal subunit protein uL6 from Lactobacillus gasseri (strain ATCC 33323 / DSM 20243 / BCRC 14619 / CIP 102991 / JCM 1131 / KCTC 3163 / NCIMB 11718 / NCTC 13722 / AM63).